The sequence spans 344 residues: KRR1 small subunit processome component homolog (344 aa).

The KH domain maps to 125-193 (DIIKIGNLVH…VRDIVLETMN (69 aa)). Basic residues predominate over residues 232 to 245 (NISKRKQPKVKKQK). 2 disordered regions span residues 232 to 260 (NISK…ESKV) and 273 to 326 (QEQK…TKVD). Residues 270–295 (FLNQEQKQAKRNQGRTEKQKEAAKRQ) are a coiled coil. Composition is skewed to basic and acidic residues over residues 283–302 (GRTE…RNKD) and 315–326 (RKKEDGSSTKVD).

The protein belongs to the KRR1 family. As to quaternary structure, monomer. Component of the ribosomal small subunit (SSU) processome.

Its subcellular location is the nucleus. It is found in the nucleolus. Functionally, required for 40S ribosome biogenesis. Involved in nucleolar processing of pre-18S ribosomal RNA and ribosome assembly. Binds to RNA. Required for female germline development, cell viability during eye development and for survival of dividing cells and epithelial cells during early wing disk development. The protein is KRR1 small subunit processome component homolog of Drosophila yakuba (Fruit fly).